Reading from the N-terminus, the 78-residue chain is Small ribosomal subunit protein bS18 (78 aa).

The protein belongs to the bacterial ribosomal protein bS18 family. In terms of assembly, part of the 30S ribosomal subunit. Forms a tight heterodimer with protein bS6.

Its function is as follows. Binds as a heterodimer with protein bS6 to the central domain of the 16S rRNA, where it helps stabilize the platform of the 30S subunit. The chain is Small ribosomal subunit protein bS18 from Geobacillus kaustophilus (strain HTA426).